The chain runs to 595 residues: Elongation factor 4 (595 aa).

Residues 1-183 form the tr-type G domain; that stretch reads MNVRNFSIIA…AIVERIPPPP (183 aa). GTP-binding positions include 13-18 and 130-133; these read DHGKST and NKID.

This sequence belongs to the TRAFAC class translation factor GTPase superfamily. Classic translation factor GTPase family. LepA subfamily.

The protein resides in the cell membrane. The catalysed reaction is GTP + H2O = GDP + phosphate + H(+). Its function is as follows. Required for accurate and efficient protein synthesis under certain stress conditions. May act as a fidelity factor of the translation reaction, by catalyzing a one-codon backward translocation of tRNAs on improperly translocated ribosomes. Back-translocation proceeds from a post-translocation (POST) complex to a pre-translocation (PRE) complex, thus giving elongation factor G a second chance to translocate the tRNAs correctly. Binds to ribosomes in a GTP-dependent manner. This Deinococcus geothermalis (strain DSM 11300 / CIP 105573 / AG-3a) protein is Elongation factor 4.